We begin with the raw amino-acid sequence, 444 residues long: MEKLLSLYQEHIKTLQNRTRDALSRHHLDNVLIHSGEPIGVFLDDSDYPFKVNAHFKAWVPVTDVPHCWLLVDGVNKPKFWFYSPVDYWHSVEALPSSYWTHEIELIHLKNVDDIQKELAPFINKNTAYIGPNTQRADSLGVSLDNVNNQSLLNYYHYYRAYKTGYELACMREAQKMAVNGHIAAREAFQAELSEFDINMAYLMATGHRDTDVPYGNIVALNEHAAVLHYTKLDHQSPDEYRSFLIDAGAEYNGYAADITRTYSAKENHEFTALVKDMNDAQQALIATMKAGVRYSEYHIQMHQRIAGLLHKYGIVKGISEEEMVSEGLTTPFLPHGLGHALGLQVHDAGGFMQDDKGTHLAAPAMYPFLRCTRIVEPGMVLTIEPGFYFIDSLLAPWREGKYRSHFDWHLIEHFKPFGGIRIEDNIIIHDNKIENMTRDLHLA.

Residues D247, D258, H340, E385, and E424 each coordinate Mn(2+).

Belongs to the peptidase M24B family. Bacterial-type prolidase subfamily. It depends on Mn(2+) as a cofactor.

It catalyses the reaction Xaa-L-Pro dipeptide + H2O = an L-alpha-amino acid + L-proline. Splits dipeptides with a prolyl residue in the C-terminal position. This Proteus mirabilis (strain HI4320) protein is Xaa-Pro dipeptidase.